Reading from the N-terminus, the 439-residue chain is Chromosomal replication initiator protein DnaA (439 aa).

The interval 1 to 75 (MESWSRCLER…GIREVVLAIG (75 aa)) is domain I, interacts with DnaA modulators. The domain II stretch occupies residues 75–101 (GSRPKTTELPVPVDTTGRLSSTVPFNG). Residues 102-319 (NLDTHYNFDN…GALNTLVARA (218 aa)) are domain III, AAA+ region. Gly-147, Gly-149, Lys-150, and Thr-151 together coordinate ATP. Residues 320–439 (NFTGRAVTIE…WDKLMRKFSE (120 aa)) form a domain IV, binds dsDNA region.

This sequence belongs to the DnaA family. Oligomerizes as a right-handed, spiral filament on DNA at oriC.

It localises to the cytoplasm. Its function is as follows. Plays an essential role in the initiation and regulation of chromosomal replication. ATP-DnaA binds to the origin of replication (oriC) to initiate formation of the DNA replication initiation complex once per cell cycle. Binds the DnaA box (a 9 base pair repeat at the origin) and separates the double-stranded (ds)DNA. Forms a right-handed helical filament on oriC DNA; dsDNA binds to the exterior of the filament while single-stranded (ss)DNA is stabiized in the filament's interior. The ATP-DnaA-oriC complex binds and stabilizes one strand of the AT-rich DNA unwinding element (DUE), permitting loading of DNA polymerase. After initiation quickly degrades to an ADP-DnaA complex that is not apt for DNA replication. Binds acidic phospholipids. The polypeptide is Chromosomal replication initiator protein DnaA (Xylella fastidiosa (strain 9a5c)).